Here is a 164-residue protein sequence, read N- to C-terminus: Small ribosomal subunit protein uS5 (164 aa).

Residues Leu11–Ile74 form the S5 DRBM domain.

This sequence belongs to the universal ribosomal protein uS5 family. As to quaternary structure, part of the 30S ribosomal subunit. Contacts proteins S4 and S8.

In terms of biological role, with S4 and S12 plays an important role in translational accuracy. Located at the back of the 30S subunit body where it stabilizes the conformation of the head with respect to the body. The sequence is that of Small ribosomal subunit protein uS5 from Buchnera aphidicola subsp. Cinara cedri (strain Cc).